Reading from the N-terminus, the 217-residue chain is Large ribosomal subunit protein uL3 (217 aa).

The protein belongs to the universal ribosomal protein uL3 family. In terms of assembly, part of the 50S ribosomal subunit. Forms a cluster with proteins L14 and L19.

Functionally, one of the primary rRNA binding proteins, it binds directly near the 3'-end of the 23S rRNA, where it nucleates assembly of the 50S subunit. This Mycobacterium bovis (strain ATCC BAA-935 / AF2122/97) protein is Large ribosomal subunit protein uL3.